Here is a 259-residue protein sequence, read N- to C-terminus: Uridylate kinase (259 aa).

10 to 13 (KLSG) serves as a coordination point for ATP. A UMP-binding site is contributed by glycine 52. 2 residues coordinate ATP: glycine 53 and arginine 57. UMP-binding positions include aspartate 72 and 134–141 (NGQPFLTT). Residues tyrosine 168 and aspartate 171 each coordinate ATP. A disordered region spans residues 236–259 (ISSSPEKSEEFGNEVLASPAESTA).

The protein belongs to the UMP kinase family. Homohexamer.

The protein localises to the cytoplasm. The catalysed reaction is UMP + ATP = UDP + ADP. It participates in pyrimidine metabolism; CTP biosynthesis via de novo pathway; UDP from UMP (UMPK route): step 1/1. With respect to regulation, inhibited by UTP. Its function is as follows. Catalyzes the reversible phosphorylation of UMP to UDP. The sequence is that of Uridylate kinase from Frankia casuarinae (strain DSM 45818 / CECT 9043 / HFP020203 / CcI3).